Reading from the N-terminus, the 312-residue chain is Malate dehydrogenase (312 aa).

NAD(+) contacts are provided by residues 7–13 and aspartate 34; that span reads GAAGGIG. Substrate contacts are provided by arginine 81 and arginine 87. Residues asparagine 94 and 117-119 each bind NAD(+); that span reads ITN. Positions 119 and 153 each coordinate substrate. The Proton acceptor role is filled by histidine 177. Residue methionine 227 coordinates NAD(+).

This sequence belongs to the LDH/MDH superfamily. MDH type 1 family. Homodimer.

It catalyses the reaction (S)-malate + NAD(+) = oxaloacetate + NADH + H(+). Functionally, catalyzes the reversible oxidation of malate to oxaloacetate. This chain is Malate dehydrogenase, found in Shigella flexneri serotype 5b (strain 8401).